The chain runs to 1254 residues: MFPFQPMYPMQPMPYRNPFAAPRRPWFPRTDPFLAMQVQELTRSMANLTFKQRRDAPPEGPSAKKPKKEASQKQKGGGQGKKKKNQGKKKAKTGPPNPKAQNGNKKKTNKKPGKRQRMVMKLESDKTFPIMLEGKINGYACVVGGKLFRPMHVEGKIDNDVLAALKTKKASKYDLEYADVPQNMRADTFKYTHEKPQGYYSWHHGAVQYENGRFTVPKGVGAKGDSGRPILDNQGRVVAIVLGGVNEGSRTALSVVMWNEKGVTVKYTPENCEQWSLVTTMCLLANVTFPCAQPPICYDRKPAETLAMLSVNVDNPGYDELLEAAVKCPGRKRRSTEELFNEYKLTRPYMARCIRCAVGSCHSPIAIEAVKSDGHDGYVRLQTSSQYGLDSSGNLKGRTMRYDMHGTIKEIPLHQVSLYTSRPCHIVDGHGYFLLARCPAGDSITMEFKKDSVRHSCSVPYEVKFNPVGRELYTHPPEHGVEQACQVYAHDAQNRGAYVEMHLPGSEVDSSLVSLSGSSVTVTPPDGTSALVECECGGTKISETINKTKQFSQCTKKEQCRAYRLQNDKWVYNSDKLPKAAGATLKGKLHVPFLLADGKCTVPLAPEPMITFGFRSVSLKLHPKNPTYLITRQLADEPHYTHELISEPAVRNFTVTEKGWEFVWGNHPPKRFWAQETAPGNPHGLPHEVITHYYHRYPMSTILGLSICAAIATVSVAASTWLFCRSRVACLTPYRLTPNARIPFCLAVLCCARTARAETTWESLDHLWNNNQQMFWIQLLIPLAALIVVTRLLRCVCCVVPFLVMAGAAAPAYEHATTMPSQAGISYNTIVNRAGYAPLPISITPTKIKLIPTVNLEYVTCHYKTGMDSPAIKCCGSQECTPTYRPDEQCKVFTGVYPFMWGGAYCFCDTENTQVSKAYVMKSDDCLADHAEAYKAHTASVQAFLNITVGEHSIVTTVYVNGETPVNFNGVKITAGPLSTAWTPFDRKIVQYAGEIYNYDFPEYGAGQPGAFGDIQSRTVSSSDLYANTNLVLQRPKAGAIHVPYTQAPSGFEQWKKDKAPSLKFTAPFGCEIYTNPIRAENCAVGSIPLAFDIPDALFTRVSETPTLSAAECTLNECVYSSDFGGIATVKYSASKSGKCAVHVPSGTATLKEAAVELTEQGSATIHFSTANIHPEFRLQICTSYVTCKGDCHPPKDHIVTHPQYHAQTFTAAVSKTAWTWLTSLLGGSAVIIIIGLVLATIVAMYVLTNQKHN.

The necessary for nucleocapsid assembly and virus assembly stretch occupies residues 1-33 (MFPFQPMYPMQPMPYRNPFAAPRRPWFPRTDPF). The interval 33 to 68 (FLAMQVQELTRSMANLTFKQRRDAPPEGPSAKKPKK) is host transcription inhibition. The Supraphysiological nuclear export signal signature appears at 41 to 48 (LTRSMANL). Residues 45-119 (MANLTFKQRR…KKPGKRQRMV (75 aa)) form a disordered region. A Nuclear localization signal motif is present at residues 64–68 (KKPKK). Over residues 80–92 (GKKKKNQGKKKAK) the composition is skewed to basic residues. The binding to the viral RNA stretch occupies residues 91–127 (AKTGPPNPKAQNGNKKKTNKKPGKRQRMVMKLESDKT). Phosphothreonine is present on residues threonine 93 and threonine 108. The span at 104-118 (NKKKTNKKPGKRQRM) shows a compositional bias: basic residues. The segment at 112-126 (PGKRQRMVMKLESDK) is ribosome-binding. A Phosphoserine modification is found at serine 124. The 150-residue stretch at 126–275 (KTFPIMLEGK…KYTPENCEQW (150 aa)) folds into the Peptidase S3 domain. Residue threonine 127 is modified to Phosphothreonine. Residues histidine 152, aspartate 174, and serine 226 each act as charge relay system in the active site. The segment at 276 to 287 (SLVTTMCLLANV) is functions as an uncleaved signal peptide for the precursor of protein E3/E2. The Extracellular portion of the chain corresponds to 276-701 (SLVTTMCLLA…HYYHRYPMST (426 aa)). Residues asparagine 286, asparagine 546, and asparagine 652 are each glycosylated (N-linked (GlcNAc...) asparagine; by host). A helical transmembrane segment spans residues 702–722 (ILGLSICAAIATVSVAASTWL). Residues 723-757 (FCRSRVACLTPYRLTPNARIPFCLAVLCCARTARA) lie on the Cytoplasmic side of the membrane. Residues cysteine 730, cysteine 750, and cysteine 751 are each lipidated (S-palmitoyl cysteine; by host). Over 758–772 (ETTWESLDHLWNNNQ) the chain is Extracellular. The chain crosses the membrane as a helical span at residues 773–793 (QMFWIQLLIPLAALIVVTRLL). The Cytoplasmic portion of the chain corresponds to 794–795 (RC). The helical transmembrane segment at 796 to 816 (VCCVVPFLVMAGAAAPAYEHA) threads the bilayer. Over 817–1224 (TTMPSQAGIS…SKTAWTWLTS (408 aa)) the chain is Extracellular. 4 cysteine pairs are disulfide-bonded: cysteine 861–cysteine 926, cysteine 874–cysteine 906, cysteine 875–cysteine 908, and cysteine 880–cysteine 890. The tract at residues 896–913 (VYPFMWGGAYCFCDTENT) is E1 fusion peptide loop. Residue asparagine 946 is glycosylated (N-linked (GlcNAc...) asparagine; by host). 4 cysteine pairs are disulfide-bonded: cysteine 1071–cysteine 1083, cysteine 1113–cysteine 1188, cysteine 1118–cysteine 1192, and cysteine 1140–cysteine 1182. The chain crosses the membrane as a helical span at residues 1225 to 1245 (LLGGSAVIIIIGLVLATIVAM). Over 1246-1254 (YVLTNQKHN) the chain is Cytoplasmic.

In terms of assembly, homodimer. Homomultimer. Interacts with host karyopherin KPNA4; this interaction allows the nuclear import of the viral capsid protein. Interacts with spike glycoprotein E2. Interacts with host IRAK1; the interaction leads to inhibition of IRAK1-dependent signaling. Part of a tetrameric complex composed of host CRM1, host importin alpha/beta dimer and the viral capsid; this complex blocks the receptor-mediated transport through the nuclear pore. Interacts with host phosphatase PPP1CA; this interaction dephosphorylates the capsid protein, which increases its ability to bind to the viral genome. The precursor of protein E3/E2 and E1 form a heterodimer shortly after synthesis. As to quaternary structure, interacts with spike glycoprotein E2. The precursor of protein E3/E2 and E1 form a heterodimer shortly after synthesis. Processing of the precursor of protein E3/E2 into E2 and E3 results in a heterodimer of the spike glycoproteins E2 and E1. Spike at virion surface are constituted of three E2-E1 heterodimers. After target cell attachment and endocytosis, E1 change conformation to form homotrimers. Interacts with 6K protein. Interacts (via fusion peptide loop) with host LDLRAD3 (via domain LDL-receptor class A 1); this interaction mediates viral entry to the host cell. 2 adjacent E2-E1 heterodimers in the trimeric spike interact with host LDLRAD3. In terms of assembly, interacts with spike glycoprotein E1. Processing of the precursor of protein E3/E2 into E2 and E3 results in a heterodimer of the spike glycoproteins E2 and E1. Spike at virion surface are constituted of a trimer of E2-E1 heterodimers. Interacts with 6K protein. Interacts with host LDLRAD3 (via domain LDL-receptor class A 1); this interaction mediates viral entry to the host cell. 2 adjacent E2-E1 heterodimers in the trimeric spike interact with host LDLRAD3. Oligomer. Interacts with spike glycoprotein E1. Interacts with spike glycoprotein E2. In terms of processing, structural polyprotein: Specific enzymatic cleavages in vivo yield mature proteins. Capsid protein is auto-cleaved during polyprotein translation, unmasking a signal peptide at the N-terminus of the precursor of E3/E2. The remaining polyprotein is then targeted to the host endoplasmic reticulum, where host signal peptidase cleaves it into pE2, 6K and E1 proteins. pE2 is further processed to mature E3 and E2 by host furin in trans-Golgi vesicle. Post-translationally, phosphorylated on serine and threonine residues. Palmitoylated via thioester bonds. These palmitoylations may induce disruption of the C-terminus transmembrane. This would result in the reorientation of E2 C-terminus from lumenal to cytoplasmic side. In terms of processing, N-glycosylated. Post-translationally, palmitoylated via thioester bonds.

It localises to the virion. The protein localises to the host cytoplasm. It is found in the host cell membrane. The protein resides in the host nucleus. Its subcellular location is the virion membrane. It carries out the reaction Autocatalytic release of the core protein from the N-terminus of the togavirus structural polyprotein by hydrolysis of a -Trp-|-Ser- bond.. Functionally, forms an icosahedral capsid with a T=4 symmetry composed of 240 copies of the capsid protein surrounded by a lipid membrane through which penetrate 80 spikes composed of trimers of E1-E2 heterodimers. The capsid protein binds to the viral RNA genome at a site adjacent to a ribosome binding site for viral genome translation following genome release. Possesses a protease activity that results in its autocatalytic cleavage from the nascent structural protein. Following its self-cleavage, the capsid protein transiently associates with ribosomes, and within several minutes the protein binds to viral RNA and rapidly assembles into icosahedric core particles. The resulting nucleocapsid eventually associates with the cytoplasmic domain of the spike glycoprotein E2 at the cell membrane, leading to budding and formation of mature virions. In case of infection, new virions attach to target cells and after clathrin-mediated endocytosis their membrane fuses with the host endosomal membrane. This leads to the release of the nucleocapsid into the cytoplasm, followed by an uncoating event necessary for the genomic RNA to become accessible. The uncoating might be triggered by the interaction of capsid proteins with ribosomes. Binding of ribosomes would release the genomic RNA since the same region is genomic RNA-binding and ribosome-binding. Specifically inhibits interleukin-1 receptor-associated kinase 1/IRAK1-dependent signaling during viral entry, representing a means by which the alphaviruses may evade innate immune detection and activation prior to viral gene expression. Inhibits host transcription. Forms a tetrameric complex with XPO1/CRM1 and the nuclear import receptor importin. This complex blocks the central channel of host nuclear pores thereby inhibiting the receptor-mediated nuclear transport and thus the host mRNA and rRNA transcription. The inhibition of transcription is linked to a cytopathic effect on the host cell. Provides the signal sequence for the translocation of the precursor of protein E3/E2 to the host endoplasmic reticulum. Furin-cleaved E3 remains associated with spike glycoprotein E1 and mediates pH protection of the latter during the transport via the secretory pathway. After virion release from the host cell, the assembly protein E3 is gradually released in the extracellular space. In terms of biological role, plays a role in viral attachment to target host cell, by binding to the cell receptor LDLRAD3. Synthesized as a p62 precursor which is processed by furin at the cell membrane just before virion budding, giving rise to E2-E1 heterodimer. The p62-E1 heterodimer is stable, whereas E2-E1 is unstable and dissociate at low pH. p62 is processed at the last step, presumably to avoid E1 fusion activation before its final export to cell surface. E2 C-terminus contains a transitory transmembrane that would be disrupted by palmitoylation, resulting in reorientation of the C-terminal tail from lumenal to cytoplasmic side. This step is critical since E2 C-terminus is involved in budding by interacting with capsid proteins. This release of E2 C-terminus in cytoplasm occurs lately in protein export, and precludes premature assembly of particles at the endoplasmic reticulum membrane. Its function is as follows. Acts as a viroporin that participates in virus glycoprotein processing and transport to the plasma membrane, cell permeabilization and budding of viral particles. Disrupts the calcium homeostasis of the cell, probably at the endoplasmic reticulum level. This leads to cytoplasmic calcium elevation. Because of its lipophilic properties, the 6K protein is postulated to influence the selection of lipids that interact with the transmembrane domains of the glycoproteins, which, in turn, affects the deformability of the bilayer required for the extreme curvature that occurs as budding proceeds. Present in low amount in virions, about 3% compared to viral glycoproteins. Functionally, class II viral fusion protein. Fusion activity is inactive as long as E1 is bound to E2 in mature virion. After virus attachment to cell receptor LDLRAD3 and endocytosis, acidification of the endosome induce dissociation of E1/E2 heterodimer and concomitant trimerization of the E1 subunits. This E1 trimer is fusion active, and promotes release of viral nucleocapsid in cytoplasm after endosome and viral membrane fusion. Efficient fusion requires the presence of cholesterol and sphingolipid in the target membrane. In Bos taurus (Bovine), this protein is Structural polyprotein.